Consider the following 751-residue polypeptide: MTQNLSQPPAVNAPESELDLVRYLDVLVANRWLIAGIAAVVMLLGATYAFLARPVYEADVLVQVEDNPNSAKSLLGDVSSLFDVKTDANAEIEILRSRMVVGKAVDNLHLYITAKPHYFPLIGAWVASRAKQLSEPGLFGLGGYTWGTELIDVDGFDVPEALEGQPFKLTALGNGRYRLENKSLDTPIEGVVGEPLEAKQSVGTIQLLVNTLAAKAGAAFELQRDSRLKTLEMLQDKLKISEKGKQSGIIGASLEGKNPALTAAIMNQIATEYVAQNIKRKAEEAERSLVFLDGLLPQLKLQLERAEMKYNEMRNLRGTFDLSEEGKAFLQESVTTETSLQELKQKRAELLTRFTASHPGVQAIDQQIAVMSGKVGAMTRRLKSLPNIEQDTVRLMRDVQVDNDLYVSLLNDMQQLKLVKAGKVGNVRLVDGAAVPEEPVKPKKLTVTALAGVLGVVLGVVAAFVRNTLFGGITEPQDIEEHTGLSVYATVPLSDVQIDLSSQLTTHKRGQYLLARRVPDDPSIESLRSLRTALQFAMQDSGNNLVVLTGPTPGVGKSFVSANLAAVIATGGKRVLLVDADMRKGYLHQYFGKDRKPGLLDLLAGDRSIEQVVHREVVPGLDFIATGLFPHNPSELLLNPRMVELMDTFRAQYDLVLIDTPPVLAVTDTAILAARAGTVLMVTRFERSTLGEIRETIKQLQHANVEVRGVVFNALDPNTYRYGYGSRYGRYRYVQYGYTSKPSAEAEAESA.

The Cytoplasmic portion of the chain corresponds to 1-31 (MTQNLSQPPAVNAPESELDLVRYLDVLVANR). Residues 32 to 52 (WLIAGIAAVVMLLGATYAFLA) traverse the membrane as a helical segment. The Periplasmic portion of the chain corresponds to 53 to 444 (RPVYEADVLV…VPEEPVKPKK (392 aa)). The chain crosses the membrane as a helical span at residues 445–465 (LTVTALAGVLGVVLGVVAAFV). Topologically, residues 466–751 (RNTLFGGITE…PSAEAEAESA (286 aa)) are cytoplasmic.

The protein belongs to the etk/wzc family.

It is found in the cell inner membrane. The catalysed reaction is L-tyrosyl-[protein] + ATP = O-phospho-L-tyrosyl-[protein] + ADP + H(+). In terms of biological role, probably involved in polymerization and/or export of exopolysaccharide EPS I which functions as a virulence factor. May be involved in an ATP-dependent process in the pathway for EPS I production, possibly export of the trimeric repeat units across the inner membrane or their polymerization. The protein is Putative tyrosine-protein kinase EpsB (epsB) of Ralstonia nicotianae (strain ATCC BAA-1114 / GMI1000) (Ralstonia solanacearum).